Consider the following 782-residue polypeptide: Chaoptin (782 aa).

LRR repeat units follow at residues 16-37 (SLLT…PSDA), 43-64 (RLEE…SFHF), 67-88 (SLKK…TFQG), 93-114 (DLTE…TFAD), 117-138 (QLEQ…AFMN), 141-162 (SLKR…TFQN), 165-186 (ELED…IFDQ), 191-212 (GMFH…PSVP), 224-245 (NIKV…FFRP), 249-270 (SLMQ…LFGN), 273-294 (HLQV…TFRN), 297-318 (KLQW…LFRF), 321-342 (NLRI…LFRE), 344-364 (GLER…TSLS), 370-391 (TLSE…GQLA), 395-416 (CLSW…TFKG), 419-442 (RLAS…SFQG), 446-467 (TLLH…STPN), 468-488 (LLSL…VAGN), 491-512 (SLRY…THSL), 514-535 (ELRH…SLLG), and 539-560 (QLEE…AFCK). N-linked (GlcNAc...) asparagine glycosylation is found at N196, N234, and N262. Residues N454 and N488 are each glycosylated (N-linked (GlcNAc...) asparagine). N530 carries N-linked (GlcNAc...) asparagine glycosylation. 3 N-linked (GlcNAc...) asparagine glycosylation sites follow: N618, N648, and N667.

This sequence belongs to the chaoptin family.

It localises to the cell membrane. In terms of biological role, required for photoreceptor cell morphogenesis. Mediates homophilic cellular adhesion. This Tribolium castaneum (Red flour beetle) protein is Chaoptin (CHP).